A 924-amino-acid chain; its full sequence is 104 kDa microneme/rhoptry antigen (924 aa).

A signal peptide spans 1–19; that stretch reads MKFLILLFNILCLFPVLAA. The tract at residues 490 to 907 is disordered; the sequence is SKKKLAPITE…KKPKKPDSAY (418 aa). 2 stretches are compositionally biased toward basic and acidic residues: residues 522–532 and 573–588; these read PGDKEGSEGHK and GPKD…EPRK. A compositionally biased stretch (low complexity) spans 592 to 617; it reads PRTASPTRRPSPKLPQLSKLPKSTSP. Residues 653-673 show a composition bias toward basic and acidic residues; it reads SFKEKFYDDYSKAASRSKETK. Residues 724 to 736 show a composition bias toward low complexity; the sequence is SPSTSPSEFFTPP. 3 stretches are compositionally biased toward basic and acidic residues: residues 737–747, 770–783, and 816–825; these read ESKRTRFHETP, KSPD…RSPS, and DPGRMAKDAS. Residues 857 to 867 are compositionally biased toward acidic residues; that stretch reads DDEGTEADDEE. The segment covering 868–878 has biased composition (basic and acidic residues); that stretch reads THPPEERQKTE. Residues 879 to 901 show a composition bias toward basic residues; that stretch reads VRRRRPPKKPSKSPRPSKPKKPK. Aspartate 904 is lipidated: GPI-anchor amidated aspartate. A propeptide spans 905–924 (removed in mature form); sequence SAYIPSILAILVVSLIVGIL.

It is found in the cell membrane. The polypeptide is 104 kDa microneme/rhoptry antigen (Theileria parva (East coast fever infection agent)).